The following is a 376-amino-acid chain: tRNA-specific 2-thiouridylase MnmA (376 aa).

ATP-binding positions include 19 to 26 (GMSGGVDS) and M45. The interval 105–107 (NPD) is interaction with target base in tRNA. Residue C110 is the Nucleophile of the active site. A disulfide bond links C110 and C210. G134 contributes to the ATP binding site. Residues 160–162 (KDQ) are interaction with tRNA. The active-site Cysteine persulfide intermediate is C210. The interval 326 to 327 (RY) is interaction with tRNA.

Belongs to the MnmA/TRMU family.

It localises to the cytoplasm. It catalyses the reaction S-sulfanyl-L-cysteinyl-[protein] + uridine(34) in tRNA + AH2 + ATP = 2-thiouridine(34) in tRNA + L-cysteinyl-[protein] + A + AMP + diphosphate + H(+). Its function is as follows. Catalyzes the 2-thiolation of uridine at the wobble position (U34) of tRNA, leading to the formation of s(2)U34. This chain is tRNA-specific 2-thiouridylase MnmA, found in Bordetella petrii (strain ATCC BAA-461 / DSM 12804 / CCUG 43448).